Reading from the N-terminus, the 490-residue chain is Tegument protein VP16 (490 aa).

Residues 11 to 35 are disordered; sequence DADGVSPPPPRPAGGPKNTPAAPPL. 4 positions are modified to phosphoserine: Ser-16, Ser-351, Ser-411, and Ser-453. The interval 411 to 490 is transcriptional activation; that stretch reads STTAPITDVS…DAMGIDDFGG (80 aa).

This sequence belongs to the herpesviridae tegument protein VP16 protein family. Interacts with VP22. Interacts with gH (via C-terminus). Interacts with the virion host shutoff protein (vhs). Interacts with VP11/12. Associates with the VP16-induced complex; binding to host HCFC1 activates VP16 for association with the octamer motif-binding host protein POU2F1, to form a multiprotein-DNA complex responsible for activating transcription of the viral immediate early genes.

The protein resides in the virion tegument. Its subcellular location is the host nucleus. In terms of biological role, transcriptional activator of immediate-early (IE) gene products (alpha genes). Acts as a key activator of lytic infection by initiating the lytic program through the assembly of the transcriptional regulatory VP16-induced complex composed of VP16 and two cellular factors, HCFC1 and POU2F 1. VP16-induced complex represents a regulatory switch: when it is on, it promotes IE-gene expression and thus lytic infection, and when it is off, it limits IE-gene transcription favoring latent infection. Functionally, may play a role in the aggregation of tegument proteins around nucleocapsids during virus morphogenesis. This Human herpesvirus 2 (strain 333) (HHV-2) protein is Tegument protein VP16.